Here is a 107-residue protein sequence, read N- to C-terminus: Putative pterin-4-alpha-carbinolamine dehydratase (107 aa).

Belongs to the pterin-4-alpha-carbinolamine dehydratase family.

The enzyme catalyses (4aS,6R)-4a-hydroxy-L-erythro-5,6,7,8-tetrahydrobiopterin = (6R)-L-erythro-6,7-dihydrobiopterin + H2O. The protein is Putative pterin-4-alpha-carbinolamine dehydratase of Paracoccus denitrificans (strain Pd 1222).